The sequence spans 412 residues: Autophagy-related protein 18 (412 aa).

WD repeat units lie at residues 100 to 139 (RFNK…NIMD), 142 to 183 (TNKL…SVST), and 186 to 226 (AHEG…RLFE). The L/FRRG motif signature appears at 227–230 (FRRG). A WD 4 repeat occupies 232-271 (TRCVNIYSLCFSSDSKYLTSSSNTETVHVFKLEKTEGVDN). The interval 363 to 412 (HNIGPKSDTSRASPTSTGSGGAAKSAEASNQSVPNMDDPDDFPPMSHTSG) is disordered. Residues 372–391 (SRASPTSTGSGGAAKSAEAS) show a composition bias toward low complexity.

Belongs to the WD repeat PROPPIN family. Expressed in neurons and intestinal cells.

The protein resides in the cytoplasmic vesicle. Its subcellular location is the phagosome membrane. The protein localises to the cytoplasm. Functionally, component of the autophagy machinery that is recruited to phosphatidylinositols on preautophagosomal structures, which are early autophagic structures, to promote autophagosome formation, and the subsequent degradation and clearance of engulfed apoptotic cells and P-granules in somatic cells. In particular, binds with high affinity to phosphatidylinositols including phosphatidylinositol 3-phosphate (PtdIns(3)P), phosphatidylinositol 4-phosphate (PtdIns(4)P), and phosphatidylinositol 5-phosphate (PtdIns(5)P), and more weakly to phosphatidylinositol 3,5-bisphosphate (PtdIns(3,5)P2). Plays a role in mitophagy, which is the autophagic consumption of mitochondria, in response to dietary restriction. Involved in xenophagy, the autophagy-mediated degradation of pathogens and pathogen products, such as toxins. Also plays a role in membrane-pore repair. In a daf-18/PTEN- and daf-16/FOXO-dependent manner, required for the proliferation of germ stem cell progenitors in the gonad during the late phases of larval development. By regulating the release of neurotransmitters and neuropeptides, involved in the control of lifespan in response to dietary restriction and daf-2 signaling. Probably through its involvement in autophagy, required for dauer formation. The sequence is that of Autophagy-related protein 18 from Caenorhabditis elegans.